A 211-amino-acid polypeptide reads, in one-letter code: FMN-dependent NADH:quinone oxidoreductase 3 (211 aa).

102–105 (MWNF) contributes to the FMN binding site.

Belongs to the azoreductase type 1 family. In terms of assembly, homodimer. FMN is required as a cofactor.

The enzyme catalyses 2 a quinone + NADH + H(+) = 2 a 1,4-benzosemiquinone + NAD(+). It catalyses the reaction N,N-dimethyl-1,4-phenylenediamine + anthranilate + 2 NAD(+) = 2-(4-dimethylaminophenyl)diazenylbenzoate + 2 NADH + 2 H(+). Functionally, quinone reductase that provides resistance to thiol-specific stress caused by electrophilic quinones. Also exhibits azoreductase activity. Catalyzes the reductive cleavage of the azo bond in aromatic azo compounds to the corresponding amines. The polypeptide is FMN-dependent NADH:quinone oxidoreductase 3 (Bacillus cereus (strain ZK / E33L)).